A 739-amino-acid chain; its full sequence is Adhesion G protein-coupled receptor L4 (739 aa).

An N-terminal signal peptide occupies residues 1–19; sequence MRLLPLLVGFSTLLNCSYT. One can recognise an EGF-like 1 domain in the interval 20–57; that stretch reads QNCSKTTCLPNAKCEVHNGVEACFCSQGYSGNGVTICE. Residues 20 to 481 are Extracellular-facing; the sequence is QNCSKTTCLP…DYNILTRITQ (462 aa). A glycan (N-linked (GlcNAc...) asparagine) is linked at N21. 9 cysteine pairs are disulfide-bonded: C22–C33, C27–C42, C44–C56, C62–C74, C68–C83, C85–C106, C112–C124, C118–C133, and C135–C156. Residues 58 to 107 form the EGF-like 2; calcium-binding domain; the sequence is DIDECSESSVCGDHAVCENVNGGFSCFCREGYQTATGKSQFTPNDGSYCQ. The EGF-like 3; calcium-binding domain maps to 108 to 157; the sequence is DIDECSESSVCGDHAVCENVNGGFSCFCREGYQTATGKSQFTPNDGSYCQ. N-linked (GlcNAc...) asparagine glycans are attached at residues N176, N226, N237, N298, N422, N430, and N444. The region spanning 293–468 is the GAIN-B domain; it reads SQFDMNSTDL…AILMSSTSSI (176 aa). Disulfide bonds link C418-C450 and C438-C452. The GPS stretch occupies residues 418–468; the sequence is CAFWNYSVDAMNNGSWSTEGCELTHSNDTHTSCRCSHLTHFAILMSSTSSI. A helical transmembrane segment spans residues 482–502; the sequence is LGIIISLICLAICIFTFWFFS. Topologically, residues 503–513 are cytoplasmic; sequence EIQSTRTTIHK. A helical membrane pass occupies residues 514-534; that stretch reads NLCCSLFLAELVFLIGININT. Residues 535-548 lie on the Extracellular side of the membrane; it reads NKLVCSIIAGLLHY. A helical membrane pass occupies residues 549–569; the sequence is FFLAAFAWMCIEGIHLYLIVV. The Cytoplasmic portion of the chain corresponds to 570–581; that stretch reads GVIYNKGFLHKN. A helical transmembrane segment spans residues 582 to 602; sequence FYIFGYLSPAVVVGFSASLGY. The Extracellular segment spans residues 603 to 622; sequence RYYGTTKVCWLSTENNFIWS. The chain crosses the membrane as a helical span at residues 623 to 643; it reads FIGPACLIILVNLLAFGVIIY. Topologically, residues 644 to 667 are cytoplasmic; sequence KVFRHTAGLKPEVSCYENIRSCAR. A helical membrane pass occupies residues 668–688; the sequence is GALALLFLLGTTWIFGVLHVV. Over 689–695 the chain is Extracellular; the sequence is HASVVTA. Residues 696–716 form a helical membrane-spanning segment; sequence YLFTVSNAFQGMFIFLFLCVL. Over 717 to 739 the chain is Cytoplasmic; the sequence is SRKIQEEYYRLFKNVPCCFGCLR.

It belongs to the G-protein coupled receptor 2 family. Adhesion G-protein coupled receptor (ADGR) subfamily. In terms of assembly, heterodimer of 2 chains generated by proteolytic processing; the large extracellular N-terminal fragment and the membrane-bound C-terminal fragment predominantly remain associated and non-covalently linked. Glycosylated. Post-translationally, proteolytically cleaved into 2 subunits, an extracellular alpha subunit and a seven-transmembrane subunit.

It localises to the cell membrane. Endothelial orphan receptor that acts as a key regulator of angiogenesis. The sequence is that of Adhesion G protein-coupled receptor L4 (Adgrl4) from Mus musculus (Mouse).